The following is a 728-amino-acid chain: Putative ankyrin repeat protein L271 (728 aa).

ANK repeat units lie at residues 142 to 171 (SDVNVIYWTSKQNYIDATKYLISIGANIKT) and 173 to 198 (IYSASKFGNLDLIISIIDGKNKDIIL). Over residues 244-267 (STKSTKSSGSPKSIKPKKSNQNNN) the composition is skewed to low complexity. A disordered region spans residues 244–271 (STKSTKSSGSPKSIKPKKSNQNNNAKIN). Positions 292–338 (TVDKMSSAKEQALNVYKEIENMENFILNKINITKKKALDKIKEIENI) form a coiled coil. 8 ANK repeats span residues 358 to 383 (TNTDTITQAIISENLNSLDLLIRQGY), 384 to 414 (DINKILYLACINNKKNVIDYLIDNKGANYEQ), 477 to 510 (DDLSPIMVACRASKNDDQLDLVKMLVSYGFNINS), 514 to 543 (IGRSALHYAVNGSNRKIIEYLLALGADYSF), 547 to 576 (NGDTPMMLAKKSNNLELLDLFQSVPKDTKT), 594 to 626 (DIKTAMSICLSSINDNQFESVQKLIMSGFNVSS), 630 to 659 (TKKTLLHMAVVNNNLRIVELLINSGININS), and 663 to 696 (LGKTPLMLACQYSHRDSKLAIVEFLLNNNAKILI).

The protein is Putative ankyrin repeat protein L271 of Acanthamoeba polyphaga (Amoeba).